The primary structure comprises 368 residues: tRNA-specific 2-thiouridylase MnmA (368 aa).

ATP contacts are provided by residues 12-19 and Met-38; that span reads GMSGGVDS. The segment at 98 to 100 is interaction with target base in tRNA; it reads NPD. Cys-103 functions as the Nucleophile in the catalytic mechanism. An intrachain disulfide couples Cys-103 to Cys-200. Position 128 (Gly-128) interacts with ATP. Positions 150 to 152 are interaction with tRNA; it reads KDQ. Cys-200 functions as the Cysteine persulfide intermediate in the catalytic mechanism. Positions 313 to 314 are interaction with tRNA; sequence RY.

This sequence belongs to the MnmA/TRMU family. Interacts with TusE.

The protein resides in the cytoplasm. The enzyme catalyses S-sulfanyl-L-cysteinyl-[protein] + uridine(34) in tRNA + AH2 + ATP = 2-thiouridine(34) in tRNA + L-cysteinyl-[protein] + A + AMP + diphosphate + H(+). Functionally, catalyzes the 2-thiolation of uridine at the wobble position (U34) of tRNA(Lys), tRNA(Glu) and tRNA(Gln), leading to the formation of s(2)U34, the first step of tRNA-mnm(5)s(2)U34 synthesis. Sulfur is provided by IscS, via a sulfur-relay system. Binds ATP and its substrate tRNAs. The polypeptide is tRNA-specific 2-thiouridylase MnmA (Pectobacterium carotovorum subsp. carotovorum (strain PC1)).